We begin with the raw amino-acid sequence, 621 residues long: DNA mismatch repair protein MutL (621 aa).

Belongs to the DNA mismatch repair MutL/HexB family.

This protein is involved in the repair of mismatches in DNA. It is required for dam-dependent methyl-directed DNA mismatch repair. May act as a 'molecular matchmaker', a protein that promotes the formation of a stable complex between two or more DNA-binding proteins in an ATP-dependent manner without itself being part of a final effector complex. The protein is DNA mismatch repair protein MutL of Xylella fastidiosa (strain M12).